Reading from the N-terminus, the 140-residue chain is Putative nickel-responsive regulator (140 aa).

Histidine 81, histidine 92, histidine 94, and cysteine 100 together coordinate Ni(2+).

The protein belongs to the transcriptional regulatory CopG/NikR family. It depends on Ni(2+) as a cofactor.

Its function is as follows. Transcriptional regulator. This is Putative nickel-responsive regulator from Methanocella arvoryzae (strain DSM 22066 / NBRC 105507 / MRE50).